Consider the following 269-residue polypeptide: Glutamate racemase (269 aa).

Residues 14-15 (DS) and 46-47 (YS) each bind substrate. Residue C78 is the Proton donor/acceptor of the active site. A substrate-binding site is contributed by 79 to 80 (NT). Catalysis depends on C189, which acts as the Proton donor/acceptor. Residue 190-191 (TH) participates in substrate binding.

This sequence belongs to the aspartate/glutamate racemases family.

The catalysed reaction is L-glutamate = D-glutamate. It functions in the pathway cell wall biogenesis; peptidoglycan biosynthesis. Provides the (R)-glutamate required for cell wall biosynthesis. The protein is Glutamate racemase of Haemophilus influenzae (strain ATCC 51907 / DSM 11121 / KW20 / Rd).